Consider the following 764-residue polypeptide: 5-methyltetrahydropteroyltriglutamate--homocysteine methyltransferase (764 aa).

5-methyltetrahydropteroyltri-L-glutamate is bound by residues 17–20 and Lys-117; that span reads RELK. Residues 437–439 and Glu-490 contribute to the L-homocysteine site; that span reads IGS. L-methionine-binding positions include 437–439 and Glu-490; that span reads IGS. 5-methyltetrahydropteroyltri-L-glutamate is bound by residues 521–522 and Trp-567; that span reads RC. Asp-605 lines the L-homocysteine pocket. Asp-605 contributes to the L-methionine binding site. Glu-611 provides a ligand contact to 5-methyltetrahydropteroyltri-L-glutamate. His-647, Cys-649, and Glu-671 together coordinate Zn(2+). Residue His-701 is the Proton donor of the active site. A Zn(2+)-binding site is contributed by Cys-733.

It belongs to the vitamin-B12 independent methionine synthase family. It depends on Zn(2+) as a cofactor.

The catalysed reaction is 5-methyltetrahydropteroyltri-L-glutamate + L-homocysteine = tetrahydropteroyltri-L-glutamate + L-methionine. The protein operates within amino-acid biosynthesis; L-methionine biosynthesis via de novo pathway; L-methionine from L-homocysteine (MetE route): step 1/1. Its function is as follows. Catalyzes the transfer of a methyl group from 5-methyltetrahydrofolate to homocysteine resulting in methionine formation. This chain is 5-methyltetrahydropteroyltriglutamate--homocysteine methyltransferase, found in Blochmanniella pennsylvanica (strain BPEN).